The sequence spans 342 residues: Phospho-N-acetylmuramoyl-pentapeptide-transferase (342 aa).

10 helical membrane-spanning segments follow: residues 8–28 (VAQP…VIAP), 58–78 (GIPS…TAIF), 86–106 (IWVI…DDYL), 116–136 (ISLE…LIFL), 152–172 (GLID…VGSS), 184–204 (LATL…HLSL), 213–233 (VVGA…LSFL), 242–262 (VFMG…MSVM), 267–287 (FIYA…MAQV), and 318–338 (IVTR…AAII).

This sequence belongs to the glycosyltransferase 4 family. MraY subfamily. The cofactor is Mg(2+).

Its subcellular location is the cell inner membrane. It catalyses the reaction UDP-N-acetyl-alpha-D-muramoyl-L-alanyl-gamma-D-glutamyl-meso-2,6-diaminopimeloyl-D-alanyl-D-alanine + di-trans,octa-cis-undecaprenyl phosphate = di-trans,octa-cis-undecaprenyl diphospho-N-acetyl-alpha-D-muramoyl-L-alanyl-D-glutamyl-meso-2,6-diaminopimeloyl-D-alanyl-D-alanine + UMP. It participates in cell wall biogenesis; peptidoglycan biosynthesis. Functionally, catalyzes the initial step of the lipid cycle reactions in the biosynthesis of the cell wall peptidoglycan: transfers peptidoglycan precursor phospho-MurNAc-pentapeptide from UDP-MurNAc-pentapeptide onto the lipid carrier undecaprenyl phosphate, yielding undecaprenyl-pyrophosphoryl-MurNAc-pentapeptide, known as lipid I. This is Phospho-N-acetylmuramoyl-pentapeptide-transferase from Anaplasma marginale (strain Florida).